We begin with the raw amino-acid sequence, 275 residues long: Tryptophan synthase alpha chain (275 aa).

Catalysis depends on proton acceptor residues Glu-60 and Asp-71.

Belongs to the TrpA family. In terms of assembly, tetramer of two alpha and two beta chains.

The catalysed reaction is (1S,2R)-1-C-(indol-3-yl)glycerol 3-phosphate + L-serine = D-glyceraldehyde 3-phosphate + L-tryptophan + H2O. Its pathway is amino-acid biosynthesis; L-tryptophan biosynthesis; L-tryptophan from chorismate: step 5/5. Functionally, the alpha subunit is responsible for the aldol cleavage of indoleglycerol phosphate to indole and glyceraldehyde 3-phosphate. The chain is Tryptophan synthase alpha chain from Prochlorococcus marinus (strain MIT 9313).